A 318-amino-acid polypeptide reads, in one-letter code: Protein-L-histidine N-pros-methyltransferase (318 aa).

The signal sequence occupies residues 1–18 (MRLLAGWLCLSLASVWLA). Asn35 is a glycosylation site (N-linked (GlcNAc...) asparagine). Positions 174, 210, and 295 each coordinate S-adenosyl-L-homocysteine.

This sequence belongs to the METTL9 family. As to expression, expressed in liver, colon, small intestine, skin, kidney and to a lesser extent in spleen, lung, thymus and stomach. Not detected in fibroblast and endothelial cells.

It is found in the endoplasmic reticulum. The protein localises to the mitochondrion. The catalysed reaction is L-histidyl-[protein] + S-adenosyl-L-methionine = N(pros)-methyl-L-histidyl-[protein] + S-adenosyl-L-homocysteine + H(+). In terms of biological role, protein-histidine N-methyltransferase that specifically catalyzes 1-methylhistidine (pros-methylhistidine) methylation of target proteins. Specifically methylates the second His of proteins with a His-x-His (HxH) motif (where 'x' is preferably a small amino acid), while exploiting the first one as a recognition signature. Catalyzes methylation of target proteins such as S100A9, NDUFB3, SLC39A5, SLC39A7, ARMC6 and DNAJB12; 1-methylhistidine modification may affect the binding of zinc and other metals to its target proteins. Constitutes the main methyltransferase for the 1-methylhistidine modification in cell. In Mus musculus (Mouse), this protein is Protein-L-histidine N-pros-methyltransferase.